Here is a 506-residue protein sequence, read N- to C-terminus: UDP-N-acetylglucosamine--peptide N-acetylglucosaminyltransferase GtfA subunit (506 aa).

Positions 1 to 78 are N-terminus R-fold-1; it reads MTVYNINLGI…FTDIKIAPTT (78 aa). Residue 16 to 19 participates in UDP binding; that stretch reads GVEY. An extended beta-sheet domain region spans residues 79 to 195; sequence VTLDQVLAQV…LYRFPDRIFY (117 aa). A C-terminus R-fold-1 region spans residues 196–306; the sequence is SKAELVRYFL…QPQIATIPVG (111 aa). Position 242 (histidine 242) interacts with N-acetyl-D-glucosamine. The tract at residues 307-506 is R-fold-2; it reads SLDQLTYPKE…LKEVRDDSAL (200 aa). Residues arginine 328, tyrosine 357, and 383–385 each bind UDP; that span reads GHA. Residue 405-407 coordinates N-acetyl-D-glucosamine; it reads GFG. UDP is bound at residue threonine 409.

This sequence belongs to the glycosyltransferase group 1 family. Glycosyltransferase 4 subfamily. As to quaternary structure, forms a heterotetramer with 2 subunits each of GtfA and GtfB. Part of the accessory SecA2/SecY2 protein translocation apparatus required to export cell wall protein GspB.

The protein localises to the cytoplasm. It localises to the cell membrane. The enzyme catalyses L-seryl-[protein] + UDP-N-acetyl-alpha-D-glucosamine = 3-O-[N-acetyl-alpha-D-glucosaminyl]-L-seryl-[protein] + UDP + H(+). Its pathway is protein modification; protein glycosylation. In terms of biological role, required for polymorphic O-glycosylation of GspB, a serine-rich repeat cell wall protein encoded upstream in the same operon. Catalyzes the first step in glycosylation by transferring N-acetylglucosamine from UDP-GlcNAc to serine residues in GspB. Part of the accessory SecA2/SecY2 system specifically required to export GspB. Upon coexpression in E.coli with GtfB glycosylates GspB constructs. Glycosylation probably occurs intracellularly. Requires GtfB for glycosylation activity, it has no activity alone. Does not use UDP-glucose as substrate. Has a fast, probably processive glycosylation phase followed by a slower, non-processive phase. The enzyme probably modifies its tertiary conformation by opening and closing its intersubunit interfaces to accomodate the increasingly glycosylated substrate; protein substrate recognition is provided by GtfB. This is UDP-N-acetylglucosamine--peptide N-acetylglucosaminyltransferase GtfA subunit from Streptococcus gordonii.